The chain runs to 327 residues: ATPase ASNA1 homolog (327 aa).

26–33 serves as a coordination point for ATP; it reads KGGVGKTT. The active site involves Asp57. Glu238 and Asn265 together coordinate ATP. Residues Cys274 and Cys277 each contribute to the Zn(2+) site.

The protein belongs to the arsA ATPase family. In terms of assembly, homodimer.

It localises to the cytoplasm. The protein localises to the endoplasmic reticulum. ATPase required for the post-translational delivery of tail-anchored (TA) proteins to the endoplasmic reticulum. Recognizes and selectively binds the transmembrane domain of TA proteins in the cytosol. This complex then targets to the endoplasmic reticulum by membrane-bound receptors, where the tail-anchored protein is released for insertion. This process is regulated by ATP binding and hydrolysis. ATP binding drives the homodimer towards the closed dimer state, facilitating recognition of newly synthesized TA membrane proteins. ATP hydrolysis is required for insertion. Subsequently, the homodimer reverts towards the open dimer state, lowering its affinity for the membrane-bound receptor, and returning it to the cytosol to initiate a new round of targeting. This chain is ATPase ASNA1 homolog, found in Entamoeba dispar (strain ATCC PRA-260 / SAW760).